Consider the following 86-residue polypeptide: Omega-theraphotoxin-Hhn1f 2 (86 aa).

The first 21 residues, 1-21, serve as a signal peptide directing secretion; it reads MKSIVFVALFGLALLAVVCSA. Positions 22–50 are excised as a propeptide; sequence SEDAHKELLKEVVRAVVVDKTDAVQAEER. 3 disulfide bridges follow: cysteine 52–cysteine 66, cysteine 59–cysteine 71, and cysteine 65–cysteine 78.

This sequence belongs to the neurotoxin 10 (Hwtx-1) family. 17 (Hntx-9) subfamily. As to expression, expressed by the venom gland.

Its subcellular location is the secreted. Ion channel inhibitor. The protein is Omega-theraphotoxin-Hhn1f 2 of Cyriopagopus hainanus (Chinese bird spider).